We begin with the raw amino-acid sequence, 230 residues long: Maleylacetoacetate isomerase (230 aa).

One can recognise a GST N-terminal domain in the interval 7 to 95 (LRVTLYTYFR…YLDEAFPDNP (89 aa)). Glutathione is bound by residues 17–22 (SSCSAR), Gln-46, Val-60, 79–80 (QS), Gln-123, and 127–129 (NLR). A GST C-terminal domain is found at 104 to 226 (NPQQRALVRS…HWRTQQDTPT (123 aa)).

This sequence belongs to the GST superfamily. Zeta family. Requires glutathione as cofactor.

It localises to the cytoplasm. The catalysed reaction is 4-maleylacetoacetate = 4-fumarylacetoacetate. The protein operates within amino-acid degradation; L-phenylalanine degradation; acetoacetate and fumarate from L-phenylalanine: step 5/6. The polypeptide is Maleylacetoacetate isomerase (maiA) (Emericella nidulans (strain FGSC A4 / ATCC 38163 / CBS 112.46 / NRRL 194 / M139) (Aspergillus nidulans)).